We begin with the raw amino-acid sequence, 235 residues long: Purine nucleoside phosphorylase DeoD-type (235 aa).

H4 serves as a coordination point for a purine D-ribonucleoside. Phosphate contacts are provided by residues G20, R24, R43, and 87–90 (RVGT). A purine D-ribonucleoside is bound by residues 179–181 (EME) and 203–204 (SD). The active-site Proton donor is the D204.

This sequence belongs to the PNP/UDP phosphorylase family. Homohexamer; trimer of homodimers.

The catalysed reaction is a purine D-ribonucleoside + phosphate = a purine nucleobase + alpha-D-ribose 1-phosphate. The enzyme catalyses a purine 2'-deoxy-D-ribonucleoside + phosphate = a purine nucleobase + 2-deoxy-alpha-D-ribose 1-phosphate. Functionally, catalyzes the reversible phosphorolytic breakdown of the N-glycosidic bond in the beta-(deoxy)ribonucleoside molecules, with the formation of the corresponding free purine bases and pentose-1-phosphate. This chain is Purine nucleoside phosphorylase DeoD-type, found in Exiguobacterium sibiricum (strain DSM 17290 / CCUG 55495 / CIP 109462 / JCM 13490 / 255-15).